The chain runs to 515 residues: 13S globulin seed storage protein (515 aa).

The first 22 residues, 1-22 (MSTKLILSFSLCLMVLSCSAQA), serve as a signal peptide directing secretion. The segment at 23 to 96 (AQLWPWRKGQ…RYVIQPGGLL (74 aa)) is igE-binding epitope. 2 disulfides stabilise this stretch: Cys-47/Cys-80 and Cys-123/Cys-327. A Cupin type-1 1 domain is found at 52-272 (LTASEPSRRV…FRDVDRETIS (221 aa)). The segment at 97 to 172 (LPSYSNAPYI…REGDVIPSPA (76 aa)) is igE-binding epitope with a very strong IgE-binding activity. 3 disordered regions span residues 123 to 156 (CPETFQSDSEYPQSQRGQHSRESESQESSRGDQH), 210 to 241 (LAGQSQQGREERRSQQQTREEGGDRQSRESDD), and 295 to 320 (PEDSEEGYERQRGDRKRDERGSGRSN). Basic and acidic residues-rich tracts occupy residues 141–156 (HSRESESQESSRGDQH), 217–239 (GREERRSQQQTREEGGDRQSRES), and 295–316 (PEDSEEGYERQRGDRKRDERGS). IgE-binding epitope stretches follow at residues 173–248 (GVVQ…LIGA) and 249–320 (NILS…GRSN). The Cupin type-1 2 domain occupies 333 to 482 (QNVNRPSHAD…SYDISTEEAY (150 aa)). Residues 347-387 (RAGRINTVNSNNLPILEFLQLSAQHVVLYKNAIIGPRWNLN) form an igE-binding epitope with a strong IgE-binding activity region. IgE-binding epitope stretches follow at residues 407–457 (EGKS…PIAG), 440–476 (EWVELKNNDNAITSPIAGRTSVLRAIPVEVLANSYDI), and 475–511 (DISTEEAYKLKNGRQEVEVFRPFQSRYEKEEEKERER).

The protein belongs to the 11S seed storage protein (globulins) family. As to quaternary structure, homohexamer. In terms of processing, proteolytically processed from a single precursor to produce an acidic and a basic chain that are linked by a disulfide bond. In terms of tissue distribution, expressed in seeds (at protein level).

Seed storage protein. This chain is 13S globulin seed storage protein, found in Fagopyrum tataricum (Tartarian buckwheat).